The chain runs to 820 residues: Leucine--tRNA ligase (820 aa).

Positions 40–51 (PYPSGAGLHVGH) match the 'HIGH' region motif. The 'KMSKS' region motif lies at 601–605 (KMSKS). Lysine 604 serves as a coordination point for ATP.

This sequence belongs to the class-I aminoacyl-tRNA synthetase family.

The protein resides in the cytoplasm. It carries out the reaction tRNA(Leu) + L-leucine + ATP = L-leucyl-tRNA(Leu) + AMP + diphosphate. The chain is Leucine--tRNA ligase from Chlamydia pneumoniae (Chlamydophila pneumoniae).